The following is a 225-amino-acid chain: uncharacterized protein (225 aa).

6 helical membrane passes run 25–45 (MMLA…IPFL), 57–77 (VFLI…ITVA), 83–103 (FIWD…NFAI), 109–129 (LYFH…SLAT), 135–155 (LLTT…FGYV), and 187–207 (IFAL…LIGV).

It localises to the cell membrane. This is an uncharacterized protein from Mycoplasma pneumoniae (strain ATCC 29342 / M129 / Subtype 1) (Mycoplasmoides pneumoniae).